The following is a 56-amino-acid chain: Large ribosomal subunit protein bL32 (56 aa).

The tract at residues 1–26 is disordered; sequence MAVQKSKVTRSRRGQRRSHDALTAAA. Residues 7-16 are compositionally biased toward basic residues; it reads KVTRSRRGQR.

Belongs to the bacterial ribosomal protein bL32 family.

The polypeptide is Large ribosomal subunit protein bL32 (rpmF) (Moritella marina (Vibrio marinus)).